Reading from the N-terminus, the 295-residue chain is Sulfotransferase 1A1 (295 aa).

48–53 (KSGTTW) serves as a coordination point for 3'-phosphoadenylyl sulfate. 106–108 (KTH) is a substrate binding site. Catalysis depends on H108, which acts as the Proton acceptor. Residues R130, S138, Y193, 227-232 (TSFKEM), and 255-259 (FMRKG) contribute to the 3'-phosphoadenylyl sulfate site. S138 carries the phosphoserine modification.

Belongs to the sulfotransferase 1 family. In terms of assembly, homodimer. In terms of tissue distribution, distal lung parenchyma.

The protein localises to the cytoplasm. It carries out the reaction a phenol + 3'-phosphoadenylyl sulfate = an aryl sulfate + adenosine 3',5'-bisphosphate + H(+). It catalyses the reaction 17beta-estradiol + 3'-phosphoadenylyl sulfate = 17beta-estradiol 3-sulfate + adenosine 3',5'-bisphosphate + H(+). The catalysed reaction is 4-ethylphenol + 3'-phosphoadenylyl sulfate = 4-ethylphenyl sulfate + adenosine 3',5'-bisphosphate + H(+). The enzyme catalyses 4-nitrophenol + 3'-phosphoadenylyl sulfate = 4-nitrophenyl sulfate + adenosine 3',5'-bisphosphate. It carries out the reaction dopamine + 3'-phosphoadenylyl sulfate = dopamine 3-O-sulfate + adenosine 3',5'-bisphosphate + H(+). It catalyses the reaction dopamine + 3'-phosphoadenylyl sulfate = dopamine 4-O-sulfate + adenosine 3',5'-bisphosphate + H(+). The catalysed reaction is 3,3',5-triiodo-L-thyronine + 3'-phosphoadenylyl sulfate = 3,3',5-triiodo-L-thyronine sulfate + adenosine 3',5'-bisphosphate + H(+). The enzyme catalyses 3,3',5'-triiodo-L-thyronine + 3'-phosphoadenylyl sulfate = 3,3',5'-triiodo-L-thyronine sulfate + adenosine 3',5'-bisphosphate + H(+). It carries out the reaction 3,3'-diiodo-L-thyronine + 3'-phosphoadenylyl sulfate = 3,3'-diiodo-L-thyronine sulfate + adenosine 3',5'-bisphosphate + H(+). It catalyses the reaction L-thyroxine + 3'-phosphoadenylyl sulfate = L-thyroxine sulfate + adenosine 3',5'-bisphosphate + H(+). Its function is as follows. Sulfotransferase that utilizes 3'-phospho-5'-adenylyl sulfate (PAPS) as sulfonate donor to catalyze the sulfate conjugation of a wide variety of acceptor molecules bearing a hydroxyl or an amine group. Sulfonation increases the water solubility of most compounds, and therefore their renal excretion, but it can also result in bioactivation to form active metabolites. Displays broad substrate specificity for small phenolic compounds. Plays an important role in the sulfonation of endogenous molecules such as steroid hormones. Mediates also the metabolic activation of carcinogenic N-hydroxyarylamines leading to highly reactive intermediates capable of forming DNA adducts, potentially resulting in mutagenesis. May play a role in gut microbiota-host metabolic interaction. O-sulfonates 4-ethylphenol (4-EP), a dietary tyrosine-derived metabolite produced by gut bacteria. The product 4-EPS crosses the blood-brain barrier and may negatively regulate oligodendrocyte maturation and myelination, affecting the functional connectivity of different brain regions associated with the limbic system. Catalyzes the sulfate conjugation of dopamine. Catalyzes the sulfation of T4 (L-thyroxine/3,5,3',5'-tetraiodothyronine), T3 (3,5,3'-triiodothyronine), rT3 (3,3',5'-triiodothyronine) and 3,3'-T2 (3,3'-diiodothyronine), with a substrate preference of 3,3'-T2 &gt; rT3 &gt; T3 &gt; T4. In Bos taurus (Bovine), this protein is Sulfotransferase 1A1 (SULT1A1).